The chain runs to 199 residues: Holliday junction branch migration complex subunit RuvA (199 aa).

The interval 1–64 (MIGRLRGILL…DDAHLLYAFA (64 aa)) is domain I. Positions 65-143 (SEKERGLFRS…DMPESGVAGM (79 aa)) are domain II. A flexible linker region spans residues 144 to 150 (RPDRVDG). Residues 151-199 (SAPGTVAEAVSALVALGYKPNEASRAVRRLDTEALTTEEIIRQALQRML) form a domain III region.

Belongs to the RuvA family. As to quaternary structure, homotetramer. Forms an RuvA(8)-RuvB(12)-Holliday junction (HJ) complex. HJ DNA is sandwiched between 2 RuvA tetramers; dsDNA enters through RuvA and exits via RuvB. An RuvB hexamer assembles on each DNA strand where it exits the tetramer. Each RuvB hexamer is contacted by two RuvA subunits (via domain III) on 2 adjacent RuvB subunits; this complex drives branch migration. In the full resolvosome a probable DNA-RuvA(4)-RuvB(12)-RuvC(2) complex forms which resolves the HJ.

Its subcellular location is the cytoplasm. Functionally, the RuvA-RuvB-RuvC complex processes Holliday junction (HJ) DNA during genetic recombination and DNA repair, while the RuvA-RuvB complex plays an important role in the rescue of blocked DNA replication forks via replication fork reversal (RFR). RuvA specifically binds to HJ cruciform DNA, conferring on it an open structure. The RuvB hexamer acts as an ATP-dependent pump, pulling dsDNA into and through the RuvAB complex. HJ branch migration allows RuvC to scan DNA until it finds its consensus sequence, where it cleaves and resolves the cruciform DNA. In Nitrosococcus oceani (strain ATCC 19707 / BCRC 17464 / JCM 30415 / NCIMB 11848 / C-107), this protein is Holliday junction branch migration complex subunit RuvA.